The following is a 234-amino-acid chain: Phosphoribosylaminoimidazole-succinocarboxamide synthase (234 aa).

The protein belongs to the SAICAR synthetase family.

The catalysed reaction is 5-amino-1-(5-phospho-D-ribosyl)imidazole-4-carboxylate + L-aspartate + ATP = (2S)-2-[5-amino-1-(5-phospho-beta-D-ribosyl)imidazole-4-carboxamido]succinate + ADP + phosphate + 2 H(+). It participates in purine metabolism; IMP biosynthesis via de novo pathway; 5-amino-1-(5-phospho-D-ribosyl)imidazole-4-carboxamide from 5-amino-1-(5-phospho-D-ribosyl)imidazole-4-carboxylate: step 1/2. The sequence is that of Phosphoribosylaminoimidazole-succinocarboxamide synthase from Streptococcus pyogenes serotype M18 (strain MGAS8232).